The following is a 200-amino-acid chain: Protein GrpE (200 aa).

Residues 1–27 show a composition bias toward basic and acidic residues; sequence MTKQEKAENQEKPTEETVEETPKKETP. Positions 1-50 are disordered; the sequence is MTKQEKAENQEKPTEETVEETPKKETPFEPVMEADEVEETTEAQAPVEEA. The span at 32–41 shows a compositional bias: acidic residues; sequence MEADEVEETT.

The protein belongs to the GrpE family. In terms of assembly, homodimer.

It is found in the cytoplasm. Functionally, participates actively in the response to hyperosmotic and heat shock by preventing the aggregation of stress-denatured proteins, in association with DnaK and GrpE. It is the nucleotide exchange factor for DnaK and may function as a thermosensor. Unfolded proteins bind initially to DnaJ; upon interaction with the DnaJ-bound protein, DnaK hydrolyzes its bound ATP, resulting in the formation of a stable complex. GrpE releases ADP from DnaK; ATP binding to DnaK triggers the release of the substrate protein, thus completing the reaction cycle. Several rounds of ATP-dependent interactions between DnaJ, DnaK and GrpE are required for fully efficient folding. The sequence is that of Protein GrpE from Latilactobacillus sakei subsp. sakei (strain 23K) (Lactobacillus sakei subsp. sakei).